A 55-amino-acid chain; its full sequence is Small integral membrane protein 27 (55 aa).

A helical transmembrane segment spans residues 11 to 31 (WIYSVLLLAIVLISWGCIIYA).

The protein localises to the membrane. The protein is Small integral membrane protein 27 of Homo sapiens (Human).